Here is a 297-residue protein sequence, read N- to C-terminus: DNA processing protein DprA (297 aa).

The protein belongs to the DprA/Smf family. In terms of assembly, interacts with RecA. Interacts with ComFA and ComFC.

Its subcellular location is the cytoplasm. Functionally, protein that helps load RecA onto ssDNA during transformation. Binds cooperatively to circular ssDNA, is able to bridge different segments of DNA. Favors the loading of RecA onto SsbA- or SsbB-coated ssDNA and formation of RecA-DNA filaments. RecA-ATP cannot catalyze homologous DNA strand exchange; SsbA and DprA activate strand exchange by RecA-ATP. The protein is DNA processing protein DprA of Bacillus subtilis (strain 168).